Reading from the N-terminus, the 240-residue chain is Lysoplasmalogenase TMEM86A (240 aa).

Topologically, residues 1–21 (MVSPVTVVKSEGPKLVPFFKA) are cytoplasmic. A helical transmembrane segment spans residues 22–42 (TCVYFVLWLPSSSPSWVSALI). A topological domain (extracellular) is located at residue lysine 43. A helical transmembrane segment spans residues 44–64 (CLPIFCLWLFLLAHGLGFLLT). Residues 65-70 (HPSATR) lie on the Cytoplasmic side of the membrane. The chain crosses the membrane as a helical span at residues 71–91 (IFVGLVFSAIGDAFLIWQDQG). Tyrosine 92 is a topological domain (extracellular). Residues 93 to 113 (FVHGMLMFAVTHMLYASAFGM) traverse the membrane as a helical segment. The Cytoplasmic portion of the chain corresponds to 114–115 (RP). Residues 116–136 (LGLRTGLLMVILSGLCYAFLY) form a helical membrane-spanning segment. Residues 137–138 (PN) are Extracellular-facing. The chain crosses the membrane as a helical span at residues 139-159 (LTGAFTYVVGVYVAIIGFMGW). The Cytoplasmic segment spans residues 160–174 (RAMAGLQLVGAAWRW). The chain crosses the membrane as a helical span at residues 175 to 195 (TELAAGTGALLFIVSDLTIAL). Topologically, residues 196-206 (DKFCFPVPYSR) are extracellular. A helical membrane pass occupies residues 207–227 (ALIMSTYYAAQMLIALSAVES). Over 228 to 240 (REPVEDYRLSKAK) the chain is Cytoplasmic.

Belongs to the TMEM86 family.

The protein resides in the endoplasmic reticulum membrane. The enzyme catalyses a 1-O-(1Z-alkenyl)-sn-glycero-3-phosphocholine + H2O = a 2,3-saturated aldehyde + sn-glycerol 3-phosphocholine. It carries out the reaction a 1-O-(1Z-alkenyl)-sn-glycero-3-phosphoethanolamine + H2O = a 2,3-saturated aldehyde + sn-glycero-3-phosphoethanolamine. Its function is as follows. Catalyzes the hydrolysis of the vinyl ether bond of choline or ethanolamine lysoplasmalogens, forming fatty aldehyde and glycerophosphocholine or glycerophosphoethanolamine, respectively and is specific for the sn-2-deacylated (lyso) form of plasmalogen. Plays an important role in lysoplasmalogen metabolism in the adipocyte tissue and macrophages. The protein is Lysoplasmalogenase TMEM86A (TMEM86A) of Bos taurus (Bovine).